The chain runs to 172 residues: Large ribosomal subunit protein uL10 (172 aa).

This sequence belongs to the universal ribosomal protein uL10 family. In terms of assembly, part of the ribosomal stalk of the 50S ribosomal subunit. The N-terminus interacts with L11 and the large rRNA to form the base of the stalk. The C-terminus forms an elongated spine to which L12 dimers bind in a sequential fashion forming a multimeric L10(L12)X complex.

Forms part of the ribosomal stalk, playing a central role in the interaction of the ribosome with GTP-bound translation factors. The polypeptide is Large ribosomal subunit protein uL10 (Ruegeria sp. (strain TM1040) (Silicibacter sp.)).